The following is a 257-amino-acid chain: Major prion protein (257 aa).

The signal sequence occupies residues 1-24; sequence MVKSHIGGWILLLFVATWSDVGLC. An interaction with GRB2, ERI3 and SYN1 region spans residues 25-234; sequence KKRPKPGGWN…ESEAYYQRGA (210 aa). The interval 28–110 is disordered; that stretch reads PKPGGWNTGG…GQWGKPNKPK (83 aa). Gly residues-rich tracts occupy residues 33–48 and 55–101; these read WNTGGGSRYPGQGSPG and QGGG…GSHG. A run of 5 repeats spans residues 54-62, 63-70, 71-78, 79-86, and 87-95. A 5 X 8 AA tandem repeats of P-H-G-G-G-W-G-Q region spans residues 54-95; it reads PQGGGGWGQPHGGGWGQPHGGGWGQPHGGGWGQPHGGGGWGQ. Positions 64, 65, 66, 72, 73, 74, 80, 81, 82, 88, 90, and 91 each coordinate Cu(2+). Cys-183 and Cys-218 form a disulfide bridge. N-linked (GlcNAc...) asparagine glycosylation is found at Asn-185 and Asn-201. Residue Ala-234 is the site of GPI-anchor amidated alanine attachment. The propeptide at 235 to 257 is removed in mature form; that stretch reads SAILFSPPPVILLISLLILLIVG.

This sequence belongs to the prion family. In terms of assembly, monomer and homodimer. Has a tendency to aggregate into amyloid fibrils containing a cross-beta spine, formed by a steric zipper of superposed beta-strands. Soluble oligomers may represent an intermediate stage on the path to fibril formation. Copper binding may promote oligomerization. Interacts with GRB2, APP, ERI3/PRNPIP and SYN1. Mislocalized cytosolically exposed PrP interacts with MGRN1; this interaction alters MGRN1 subcellular location and causes lysosomal enlargement. Interacts with KIAA1191.

It localises to the cell membrane. It is found in the golgi apparatus. Functionally, its primary physiological function is unclear. Has cytoprotective activity against internal or environmental stresses. May play a role in neuronal development and synaptic plasticity. May be required for neuronal myelin sheath maintenance. May play a role in iron uptake and iron homeostasis. Soluble oligomers are toxic to cultured neuroblastoma cells and induce apoptosis (in vitro). Association with GPC1 (via its heparan sulfate chains) targets PRNP to lipid rafts. Also provides Cu(2+) or Zn(2+) for the ascorbate-mediated GPC1 deaminase degradation of its heparan sulfate side chains. The sequence is that of Major prion protein from Vulpes lagopus (Arctic fox).